The sequence spans 218 residues: DNA-binding protein HU 2 (218 aa).

Positions 1 to 91 are bacterial histone-like domain; it reads MNKAQLVEAI…QGFKDLVSGS (91 aa). The segment at 101-218 is disordered; it reads VKKAPKGSLS…TAKKATARKK (118 aa). Residues 118–218 are degenerate repeats region; that stretch reads KAAGKKAAAK…TAKKATARKK (101 aa). Residues 127–161 show a composition bias toward low complexity; the sequence is KKATGAAKKTTGAAKKTSAAAKKTTAKKTTGAAKT. Residues 162–172 are compositionally biased toward basic residues; sequence TAKKTTAKKSA. The segment covering 173–182 has biased composition (low complexity); sequence AKTTTAAAKK. The segment covering 183–218 has biased composition (basic residues); the sequence is TAAKKAPAKKATAKKAPAKKSTARKTTAKKATARKK.

This sequence belongs to the bacterial histone-like protein family. Long actinobacterial subfamily. As to quaternary structure, homodimer.

It is found in the cytoplasm. The protein localises to the nucleoid. Functionally, histone-like DNA-binding protein which is capable of wrapping DNA to stabilize it, and thus to prevent its denaturation under extreme environmental conditions. This Streptomyces coelicolor (strain ATCC BAA-471 / A3(2) / M145) protein is DNA-binding protein HU 2 (hup2).